A 793-amino-acid chain; its full sequence is Serine/threonine-protein phosphatase 1 regulatory subunit GAC1 (793 aa).

A compositionally biased stretch (polar residues) spans 1–10 (MVIQTATTLS). Residues 1–20 (MVIQTATTLSPAKARPSFPH) are disordered. One can recognise a CBM21 domain in the interval 235-360 (TKYLNGQNVK…NNNGKNYHLF (126 aa)). Phosphoserine occurs at positions 415 and 424. 2 disordered regions span residues 450–491 (LENA…SIDL) and 616–671 (TTMD…LNDH). Residues 623–633 (KTSTINNSTDT) show a composition bias toward polar residues. Over residues 637–648 (PSKENGTVKENK) the composition is skewed to basic and acidic residues. The span at 649-665 (SSANSTSAPSSSQNRAS) shows a compositional bias: low complexity.

Its function is as follows. Regulates the activity of glycogen synthase. It is most probably a regulatory subunit for protein phosphatase type 1. The protein is Serine/threonine-protein phosphatase 1 regulatory subunit GAC1 (GAC1) of Saccharomyces cerevisiae (strain ATCC 204508 / S288c) (Baker's yeast).